The following is a 434-amino-acid chain: ATP-dependent protease ATPase subunit HslU (434 aa).

ATP contacts are provided by residues Ile18, 60 to 65, Asp247, Glu312, and Arg384; that span reads GVGKTE.

It belongs to the ClpX chaperone family. HslU subfamily. A double ring-shaped homohexamer of HslV is capped on each side by a ring-shaped HslU homohexamer. The assembly of the HslU/HslV complex is dependent on binding of ATP.

The protein localises to the cytoplasm. ATPase subunit of a proteasome-like degradation complex; this subunit has chaperone activity. The binding of ATP and its subsequent hydrolysis by HslU are essential for unfolding of protein substrates subsequently hydrolyzed by HslV. HslU recognizes the N-terminal part of its protein substrates and unfolds these before they are guided to HslV for hydrolysis. The polypeptide is ATP-dependent protease ATPase subunit HslU (Brucella suis (strain ATCC 23445 / NCTC 10510)).